A 243-amino-acid polypeptide reads, in one-letter code: UPF0246 protein gbs2036 (243 aa).

It belongs to the UPF0246 family.

This chain is UPF0246 protein gbs2036, found in Streptococcus agalactiae serotype III (strain NEM316).